The sequence spans 291 residues: Phosphatidylglycerol--prolipoprotein diacylglyceryl transferase (291 aa).

The next 7 membrane-spanning stretches (helical) occupy residues 21-41 (VALH…MWLA), 60-80 (LLYA…VLFY), 96-116 (WDGG…MIIF), 130-150 (FIAP…FING), 198-218 (SQLY…NLFI), 225-245 (GAVS…VEFF), and 260-280 (ISMG…MMVW). Arg-143 is a binding site for a 1,2-diacyl-sn-glycero-3-phospho-(1'-sn-glycerol).

Belongs to the Lgt family.

The protein resides in the cell inner membrane. The enzyme catalyses L-cysteinyl-[prolipoprotein] + a 1,2-diacyl-sn-glycero-3-phospho-(1'-sn-glycerol) = an S-1,2-diacyl-sn-glyceryl-L-cysteinyl-[prolipoprotein] + sn-glycerol 1-phosphate + H(+). Its pathway is protein modification; lipoprotein biosynthesis (diacylglyceryl transfer). Its function is as follows. Catalyzes the transfer of the diacylglyceryl group from phosphatidylglycerol to the sulfhydryl group of the N-terminal cysteine of a prolipoprotein, the first step in the formation of mature lipoproteins. The chain is Phosphatidylglycerol--prolipoprotein diacylglyceryl transferase from Salmonella newport (strain SL254).